Here is a 606-residue protein sequence, read N- to C-terminus: Dihydroxy-acid dehydratase ilvC, mitochondrial (606 aa).

Cysteine 84 lines the [2Fe-2S] cluster pocket. Aspartate 116 lines the Mg(2+) pocket. Position 157 (cysteine 157) interacts with [2Fe-2S] cluster. Aspartate 158 provides a ligand contact to Mg(2+). Position 232 (cysteine 232) interacts with [2Fe-2S] cluster. Residue glutamate 485 coordinates Mg(2+). Serine 511 (proton acceptor) is an active-site residue.

Belongs to the IlvD/Edd family. [2Fe-2S] cluster is required as a cofactor. Mg(2+) serves as cofactor.

Its subcellular location is the mitochondrion. It catalyses the reaction (2R)-2,3-dihydroxy-3-methylbutanoate = 3-methyl-2-oxobutanoate + H2O. The catalysed reaction is (2R,3R)-2,3-dihydroxy-3-methylpentanoate = (S)-3-methyl-2-oxopentanoate + H2O. Its pathway is amino-acid biosynthesis; L-isoleucine biosynthesis; L-isoleucine from 2-oxobutanoate: step 3/4. It functions in the pathway amino-acid biosynthesis; L-valine biosynthesis; L-valine from pyruvate: step 3/4. DHAD activity is inhibited in dose-dependent manner by 2-hydroxy-3-methylbutyric acid with an IC(50) of about 8 mM. In terms of biological role, dihydroxyacid dehydratase that catalyzes the third step in the common pathway leading to biosynthesis of branched-chain amino acids. Catalyzes the dehydration of (2R,3R)-2,3-dihydroxy-3-methylpentanoate (2,3-dihydroxy-3-methylvalerate) into 2-oxo-3-methylpentanoate (2-oxo-3-methylvalerate) and of (2R)-2,3-dihydroxy-3-methylbutanoate (2,3-dihydroxyisovalerate) into 2-oxo-3-methylbutanoate (2-oxoisovalerate), the penultimate precursor to L-isoleucine and L-valine, respectively. IlvC and the branched-chain amino acid biosynthesis are crucial for virulence and may be a potential target to develop antifungal agents. The sequence is that of Dihydroxy-acid dehydratase ilvC, mitochondrial from Aspergillus fumigatus (strain ATCC MYA-4609 / CBS 101355 / FGSC A1100 / Af293) (Neosartorya fumigata).